The chain runs to 200 residues: Small ribosomal subunit protein uS4 (200 aa).

The tract at residues 22–43 (TGKELQKRPYPPGQHGPSQRRK) is disordered. Residues 92 to 152 (SRLDNLVYRL…EKSRNLQVIK (61 aa)) enclose the S4 RNA-binding domain.

The protein belongs to the universal ribosomal protein uS4 family. In terms of assembly, part of the 30S ribosomal subunit. Contacts protein S5. The interaction surface between S4 and S5 is involved in control of translational fidelity.

Its function is as follows. One of the primary rRNA binding proteins, it binds directly to 16S rRNA where it nucleates assembly of the body of the 30S subunit. In terms of biological role, with S5 and S12 plays an important role in translational accuracy. This is Small ribosomal subunit protein uS4 from Geobacillus sp. (strain WCH70).